A 269-amino-acid chain; its full sequence is Surfeit locus protein 4 (269 aa).

5 consecutive transmembrane segments (helical) span residues 65–85, 92–112, 179–199, 203–223, and 242–262; these read LASSFVFLNLLGQLTGCVLVL, YACFGLFGIIALQTIAYSILW, FFSIIQNIVGTALMILVAIGF, LAALTLVVWLFAINVYFNAFW, and TMSVIGGLLLVVALGPGGVSM. Residues 266-269 carry the Di-lysine motif motif; that stretch reads KKEW.

The protein belongs to the SURF4 family. As to quaternary structure, found in a complex composed at least of SURF4, TMED2 and TMED10. May interact with LMAN1. Interacts with ZFYVE27 and with KIF5A in a ZFYVE27-dependent manner. Interacts with STING1. Interacts with SAR1B. Interacts with TMEM41B.

It is found in the endoplasmic reticulum membrane. It localises to the endoplasmic reticulum-Golgi intermediate compartment membrane. The protein localises to the golgi apparatus membrane. Endoplasmic reticulum cargo receptor that mediates the export of lipoproteins by recruiting cargos into COPII vesicles to facilitate their secretion. Acts as a cargo receptor for lipoproteins bearing both APOB and APOA1, thereby regulating lipoprotein delivery and the maintenance of lipid homeostasis. Synergizes with the GTPase SAR1B to mediate transport of circulating lipoproteins. Promotes the secretion of PCSK9. Also mediates the efficient secretion of erythropoietin (EPO). May also play a role in the maintenance of the architecture of the endoplasmic reticulum-Golgi intermediate compartment and of the Golgi. The protein is Surfeit locus protein 4 of Mus musculus (Mouse).